Reading from the N-terminus, the 69-residue chain is Protein transport protein Sec61 subunit gamma-3 (69 aa).

Residue Met1 is modified to N-acetylmethionine. The Cytoplasmic segment spans residues 1-32; that stretch reads MEAIDSAIDPLRDFAKSSVRLVQRCHKPDRKE. The chain crosses the membrane as a helical span at residues 33-61; that stretch reads FTKVAVRTAIGFVVMGFVGFFVKLVFIPI. The Extracellular portion of the chain corresponds to 62–69; it reads NNIIVGSS.

Belongs to the SecE/SEC61-gamma family. As to quaternary structure, heterotrimeric complex composed of SEC61-alpha, SEC61-beta and SEC61-gamma.

It is found in the endoplasmic reticulum membrane. In terms of biological role, necessary for protein translocation in the endoplasmic reticulum. The chain is Protein transport protein Sec61 subunit gamma-3 (SEC61G3) from Arabidopsis thaliana (Mouse-ear cress).